The chain runs to 1094 residues: Probable arabinosyltransferase C (1094 aa).

13 helical membrane-spanning segments follow: residues 28 to 50 (IARY…TPLL), 232 to 251 (AAMI…LHIL), 264 to 286 (PARW…WWHF), 341 to 360 (SIWM…WVIS), 373 to 392 (TSRA…WLPL), 431 to 453 (IGAL…LVAI), 466 to 488 (RFGV…IPIF), 530 to 552 (SIAR…AMSL), 565 to 582 (SRRI…MMFT), 586 to 608 (WTHH…AVAV), 620 to 642 (TVFA…GWWY), 657 to 679 (WRWS…AAWF), and 700 to 722 (LAGI…EVVS). The segment covering 817–831 (GSEPGTEGGTTAAPG) has biased composition (low complexity). Residues 817–836 (GSEPGTEGGTTAAPGINGSR) are disordered.

This sequence belongs to the emb family.

The protein resides in the cell membrane. Its function is as follows. Arabinosyl transferase responsible for the polymerization of arabinose into the arabinan of arabinogalactan. This is Probable arabinosyltransferase C (embC) from Mycobacterium tuberculosis (strain CDC 1551 / Oshkosh).